Here is a 619-residue protein sequence, read N- to C-terminus: Probable pectinesterase/pectinesterase inhibitor 25 (619 aa).

The N-terminal stretch at 1-23 (MKMQTLNFTSSLLFLSFIFLSCA) is a signal peptide. The tract at residues 31 to 84 (SPSQPHSEPPSQLPFEPPVESPFFPPSQPPIFVPPSQPPSLPPSQSQSPSLACK) is disordered. The segment covering 37-72 (SEPPSQLPFEPPVESPFFPPSQPPIFVPPSQPPSLP) has biased composition (pro residues). The tract at residues 73–231 (PSQSQSPSLA…TRLYSISLGL (159 aa)) is pectinesterase inhibitor 25. N-linked (GlcNAc...) asparagine glycosylation is found at asparagine 220, asparagine 255, asparagine 312, asparagine 325, and asparagine 364. Residues 302–601 (AVIVGPFKSD…FTVYNFTMGD (300 aa)) are pectinesterase 25. Threonine 380 is a binding site for substrate. An N-linked (GlcNAc...) asparagine glycan is attached at asparagine 382. Glutamine 410 is a substrate binding site. The Proton donor; for pectinesterase activity role is filled by aspartate 433. Cysteine 447 and cysteine 467 are oxidised to a cystine. The active-site Nucleophile; for pectinesterase activity is aspartate 454. A glycan (N-linked (GlcNAc...) asparagine) is linked at asparagine 500. The substrate site is built by arginine 522 and tryptophan 524. Residues asparagine 550, asparagine 591, and asparagine 596 are each glycosylated (N-linked (GlcNAc...) asparagine).

The protein in the N-terminal section; belongs to the PMEI family. In the C-terminal section; belongs to the pectinesterase family. In terms of tissue distribution, expressed in siliques.

The protein resides in the secreted. The protein localises to the cell wall. The catalysed reaction is [(1-&gt;4)-alpha-D-galacturonosyl methyl ester](n) + n H2O = [(1-&gt;4)-alpha-D-galacturonosyl](n) + n methanol + n H(+). It functions in the pathway glycan metabolism; pectin degradation; 2-dehydro-3-deoxy-D-gluconate from pectin: step 1/5. In terms of biological role, acts in the modification of cell walls via demethylesterification of cell wall pectin. This chain is Probable pectinesterase/pectinesterase inhibitor 25 (PME25), found in Arabidopsis thaliana (Mouse-ear cress).